The primary structure comprises 507 residues: Maturase K (507 aa).

Belongs to the intron maturase 2 family. MatK subfamily.

The protein resides in the plastid. The protein localises to the chloroplast. In terms of biological role, usually encoded in the trnK tRNA gene intron. Probably assists in splicing its own and other chloroplast group II introns. This chain is Maturase K, found in Cupaniopsis anacardioides (Carrotwood).